We begin with the raw amino-acid sequence, 972 residues long: 116 kDa U5 small nuclear ribonucleoprotein component (972 aa).

Position 1 is an N-acetylmethionine (methionine 1). The interval 1-54 (MDTDLYDEFGNYIGPELDSDEDDDELGRETKDLDEMDDDDDDDDVGDHDDDHPG) is disordered. Acidic residues-rich tracts occupy residues 17–26 (LDSDEDDDEL) and 34–48 (DEMD…VGDH). Serine 19 carries the phosphoserine modification. A Glycyl lysine isopeptide (Lys-Gly) (interchain with G-Cter in SUMO1); alternate cross-link involves residue lysine 64. Lysine 64 participates in a covalent cross-link: Glycyl lysine isopeptide (Lys-Gly) (interchain with G-Cter in SUMO2); alternate. Threonine 86 carries the post-translational modification Phosphothreonine. The 283-residue stretch at 127–409 (ELIRNVTLCG…GIHLTKEELK (283 aa)) folds into the tr-type G domain. GTP is bound by residues 136–143 (GHLHHGKT), 204–208 (DTPGH), and 258–261 (NKID).

Belongs to the TRAFAC class translation factor GTPase superfamily. Classic translation factor GTPase family. EF-G/EF-2 subfamily. As to quaternary structure, component of the U5 snRNP and the U4/U6-U5 tri-snRNP complex, a building block of the spliceosome. The U4/U6-U5 tri-snRNP complex is composed of the U4, U6 and U5 snRNAs and at least PRPF3, PRPF4, PRPF6, PRPF8, PRPF31, SNRNP200, TXNL4A, SNRNP40, DDX23, CD2BP2, PPIH, SNU13, EFTUD2, SART1 and USP39. Component of the pre-catalytic, catalytic and post-catalytic spliceosome complexes. Component of the minor spliceosome, which splices U12-type introns. Within this complex, interacts with CRIPT. Interacts with ERBB4 and PRPF8. Interacts with PIH1D1. Interacts with RPAP3 and URI1 in a ZNHIT2-dependent manner. Interacts with NRDE2. Interacts with FAM50A. Interacts with UBL5.

The protein resides in the nucleus. In terms of biological role, required for pre-mRNA splicing as component of the spliceosome, including pre-catalytic, catalytic and post-catalytic spliceosomal complexes. Component of the U5 snRNP and the U4/U6-U5 tri-snRNP complex, a building block of the spliceosome. As a component of the minor spliceosome, involved in the splicing of U12-type introns in pre-mRNAs. The protein is 116 kDa U5 small nuclear ribonucleoprotein component (EFTUD2) of Homo sapiens (Human).